Here is a 119-residue protein sequence, read N- to C-terminus: Integration host factor subunit beta (119 aa).

The tract at residues 91–119 (DLVGNDQGDDSSNGSSDPLQSVMDMHAMH) is disordered. Residues 94-107 (GNDQGDDSSNGSSD) are compositionally biased toward low complexity.

Belongs to the bacterial histone-like protein family. Heterodimer of an alpha and a beta chain.

This protein is one of the two subunits of integration host factor, a specific DNA-binding protein that functions in genetic recombination as well as in transcriptional and translational control. This is Integration host factor subunit beta from Bordetella parapertussis (strain 12822 / ATCC BAA-587 / NCTC 13253).